A 494-amino-acid chain; its full sequence is 3-octaprenyl-4-hydroxybenzoate carboxy-lyase (494 aa).

Asn172 contacts Mn(2+). Prenylated FMN is bound by residues 175-177, 189-191, and 194-195; these read IYR, RWL, and RG. A Mn(2+)-binding site is contributed by Glu238. The Proton donor role is filled by Asp287.

This sequence belongs to the UbiD family. Homohexamer. Requires prenylated FMN as cofactor. Mn(2+) serves as cofactor.

It is found in the cell membrane. The enzyme catalyses a 4-hydroxy-3-(all-trans-polyprenyl)benzoate + H(+) = a 2-(all-trans-polyprenyl)phenol + CO2. It functions in the pathway cofactor biosynthesis; ubiquinone biosynthesis. In terms of biological role, catalyzes the decarboxylation of 3-octaprenyl-4-hydroxy benzoate to 2-octaprenylphenol, an intermediate step in ubiquinone biosynthesis. In Shigella flexneri serotype 5b (strain 8401), this protein is 3-octaprenyl-4-hydroxybenzoate carboxy-lyase.